A 275-amino-acid polypeptide reads, in one-letter code: Large ribosomal subunit protein uL2c (275 aa).

Disordered stretches follow at residues 1-28 (MGIR…TKSK) and 227-251 (PCDH…TPWG). Residues 10 to 22 (TPGTRNRSSSDFS) are compositionally biased toward polar residues.

It belongs to the universal ribosomal protein uL2 family. Part of the 50S ribosomal subunit.

Its subcellular location is the plastid. The protein localises to the chloroplast. The polypeptide is Large ribosomal subunit protein uL2c (rpl2) (Rhodomonas salina (Cryptomonas salina)).